The following is a 409-amino-acid chain: Growth-regulating factor 8 (409 aa).

Composition is skewed to gly residues over residues Met-1 to His-10 and Gln-27 to Gln-36. The tract at residues Met-1–Ser-81 is disordered. The segment covering Ser-56–Cys-68 has biased composition (low complexity). The QLQ domain maps to Pro-107–Arg-142. One can recognise a WRC domain in the interval Asp-158–Gly-202. 2 short sequence motifs (bipartite nuclear localization signal) span residues Arg-163–Arg-173 and Arg-191–Lys-198. The interval Ser-221 to Asp-242 is disordered.

Belongs to the GRF family.

The protein localises to the nucleus. Transcription activator that plays a regulatory role in gibberellin-induced stem elongation. This chain is Growth-regulating factor 8 (GRF8), found in Oryza sativa subsp. japonica (Rice).